Reading from the N-terminus, the 379-residue chain is Transcription termination factor Rho (379 aa).

The Rho RNA-BD domain occupies 1–68 (MTDKYGFLRS…KRIFQINGRF (68 aa)). ATP contacts are provided by residues 111–116 (GKGQRG), 123–128 (KTGKTT), and Arg-154.

Belongs to the Rho family. Homohexamer. The homohexamer assembles into an open ring structure.

Functionally, facilitates transcription termination by a mechanism that involves Rho binding to the nascent RNA, activation of Rho's RNA-dependent ATPase activity, and release of the mRNA from the DNA template. The polypeptide is Transcription termination factor Rho (Karelsulcia muelleri (strain SMDSEM) (Sulcia muelleri)).